We begin with the raw amino-acid sequence, 259 residues long: Proteasome assembly chaperone 2 (259 aa).

Belongs to the PSMG2 family. Forms a heterodimer with psmg1. Post-translationally, degraded by the proteasome upon completion of 20S proteasome maturation.

It is found in the nucleus. Its function is as follows. Chaperone protein which promotes assembly of the 20S proteasome as part of a heterodimer with psmg1. In Xenopus laevis (African clawed frog), this protein is Proteasome assembly chaperone 2.